A 251-amino-acid chain; its full sequence is Small ribosomal subunit protein uS2 (251 aa).

Belongs to the universal ribosomal protein uS2 family.

The protein is Small ribosomal subunit protein uS2 of Azoarcus sp. (strain BH72).